A 567-amino-acid polypeptide reads, in one-letter code: Urease subunit alpha (567 aa).

A Urease domain is found at 129-567; it reads GGIDTHIHWI…LPMAQRYFLF (439 aa). The Ni(2+) site is built by His-134, His-136, and Lys-217. Lys-217 is modified (N6-carboxylysine). His-219 is a binding site for substrate. Ni(2+) is bound by residues His-246 and His-272. Residue His-320 is the Proton donor of the active site. Ni(2+) is bound at residue Asp-360.

This sequence belongs to the metallo-dependent hydrolases superfamily. Urease alpha subunit family. In terms of assembly, heterotrimer of UreA (gamma), UreB (beta) and UreC (alpha) subunits. Three heterotrimers associate to form the active enzyme. Ni cation is required as a cofactor. Carboxylation allows a single lysine to coordinate two nickel ions.

The protein resides in the cytoplasm. It catalyses the reaction urea + 2 H2O + H(+) = hydrogencarbonate + 2 NH4(+). It functions in the pathway nitrogen metabolism; urea degradation; CO(2) and NH(3) from urea (urease route): step 1/1. The chain is Urease subunit alpha from Enterobacter sp. (strain 638).